Reading from the N-terminus, the 564-residue chain is Mercuric reductase (564 aa).

Residues 1–65 (MSTLKITGMT…AVAGLGYRAT (65 aa)) form the HMA domain. A metal cation contacts are provided by C11 and C14. Positions 109, 129, and 134 each coordinate FAD. A disulfide bond links C135 and C140. 4 residues coordinate FAD: K144, A210, D406, and V414. Residues C561 and C562 each contribute to the Hg(2+) site.

The protein belongs to the class-I pyridine nucleotide-disulfide oxidoreductase family. In terms of assembly, homodimer. FAD serves as cofactor.

The catalysed reaction is Hg + NADP(+) + H(+) = Hg(2+) + NADPH. Functionally, resistance to Hg(2+) in bacteria appears to be governed by a specialized system which includes mercuric reductase. MerA protein is responsible for volatilizing mercury as Hg(0). This is Mercuric reductase (merA) from Shigella flexneri.